We begin with the raw amino-acid sequence, 227 residues long: UPF0173 metal-dependent hydrolase BCG9842_B0515 (227 aa).

The protein belongs to the UPF0173 family.

This chain is UPF0173 metal-dependent hydrolase BCG9842_B0515, found in Bacillus cereus (strain G9842).